The following is a 480-amino-acid chain: ATP synthase subunit beta (480 aa).

166–173 (GGAGVGKT) contributes to the ATP binding site.

This sequence belongs to the ATPase alpha/beta chains family. In terms of assembly, F-type ATPases have 2 components, CF(1) - the catalytic core - and CF(0) - the membrane proton channel. CF(1) has five subunits: alpha(3), beta(3), gamma(1), delta(1), epsilon(1). CF(0) has three main subunits: a(1), b(2) and c(9-12). The alpha and beta chains form an alternating ring which encloses part of the gamma chain. CF(1) is attached to CF(0) by a central stalk formed by the gamma and epsilon chains, while a peripheral stalk is formed by the delta and b chains.

The protein resides in the cell membrane. The catalysed reaction is ATP + H2O + 4 H(+)(in) = ADP + phosphate + 5 H(+)(out). Produces ATP from ADP in the presence of a proton gradient across the membrane. The catalytic sites are hosted primarily by the beta subunits. In Streptomyces griseus subsp. griseus (strain JCM 4626 / CBS 651.72 / NBRC 13350 / KCC S-0626 / ISP 5235), this protein is ATP synthase subunit beta.